Consider the following 211-residue polypeptide: Outer surface protein C (211 aa).

An N-terminal signal peptide occupies residues 1–18; it reads MKKNTLSAILMTLFLFIS. C19 is lipidated: N-palmitoyl cysteine. Residue C19 is the site of S-diacylglycerol cysteine attachment.

It belongs to the OspC lipoprotein family. In terms of assembly, homodimer. Interacts with tick I.ricinus salivary protein Iric-1, Iric-2 and Iric-3. Binds human (host) plasminogen.

The protein localises to the cell outer membrane. Its subcellular location is the cell surface. Major immunodominant protein in mammalian hosts. Required for initial stages of mammalian infection. Inhibits macrophage-mediated phagocytosis of the bacteria. Binds human plasminogen; this probably confers an extracellular protease activity on the bacteria that allows it to traverse tissue. Interaction with tick I.ricinus salivary protein Salp15 protects the bacteria from antibody-mediated killing in vitro and in vivo. The chain is Outer surface protein C from Borreliella burgdorferi (Lyme disease spirochete).